The primary structure comprises 466 residues: Transcription factor SOX-10 (466 aa).

Residues 1 to 67 (MAEEQDLSEV…QQDGEADDDK (67 aa)) form a disordered region. Low complexity predominate over residues 23-32 (LSPGSAPSLG). A Phosphoserine modification is found at Ser24. The segment at 62 to 102 (EADDDKFPVCIREAVSQVLSGYDWTLVPMPVRVNGASKSKP) is dimerization (DIM). A DNA-binding region (HMG box) is located at residues 104–172 (VKRPMNAFMV…QHKKDHPDYK (69 aa)). A Nuclear export signal motif is present at residues 134 to 145 (LSKTLGKLWRLL). 2 stretches are compositionally biased toward basic and acidic residues: residues 160 to 173 (LRMQ…DYKY) and 254 to 271 (ADPK…KPHI). Disordered stretches follow at residues 160–199 (LRMQ…EQGG), 212–274 (LDHR…IDFG), 354–375 (AQVK…QPST), and 433–466 (RPLY…LSRP). Residues 228-310 (PEHPSGQSHG…LPPNGHPGHV (83 aa)) are transactivation domain (TAM). The tract at residues 353 to 466 (KAQVKTETAG…QPVYTTLSRP (114 aa)) is transactivation domain (TAC). Residues 440 to 466 (SDPSPSGPQSHSPTHWEQPVYTTLSRP) show a composition bias toward polar residues.

In terms of assembly, monomer. Interacts with ARMCX3 at the mitochondrial outer membrane surface. Interacts with PAX3. In terms of tissue distribution, expressed in fetal brain and in adult brain, heart, small intestine and colon.

Its subcellular location is the cytoplasm. The protein localises to the nucleus. It is found in the mitochondrion outer membrane. In terms of biological role, transcription factor that plays a central role in developing and mature glia. Specifically activates expression of myelin genes, during oligodendrocyte (OL) maturation, such as DUSP15 and MYRF, thereby playing a central role in oligodendrocyte maturation and CNS myelination. Once induced, MYRF cooperates with SOX10 to implement the myelination program. Transcriptional activator of MITF, acting synergistically with PAX3. Transcriptional activator of MBP, via binding to the gene promoter. This chain is Transcription factor SOX-10 (SOX10), found in Homo sapiens (Human).